We begin with the raw amino-acid sequence, 281 residues long: NADPH-dependent 7-cyano-7-deazaguanine reductase (281 aa).

88–90 (VES) serves as a coordination point for substrate. 90 to 91 (SK) lines the NADPH pocket. Cysteine 189 (thioimide intermediate) is an active-site residue. Aspartate 196 serves as the catalytic Proton donor. 228 to 229 (HE) is a binding site for substrate. NADPH is bound at residue 257-258 (RG).

Belongs to the GTP cyclohydrolase I family. QueF type 2 subfamily. As to quaternary structure, homodimer.

The protein resides in the cytoplasm. It catalyses the reaction 7-aminomethyl-7-carbaguanine + 2 NADP(+) = 7-cyano-7-deazaguanine + 2 NADPH + 3 H(+). It participates in tRNA modification; tRNA-queuosine biosynthesis. Catalyzes the NADPH-dependent reduction of 7-cyano-7-deazaguanine (preQ0) to 7-aminomethyl-7-deazaguanine (preQ1). This chain is NADPH-dependent 7-cyano-7-deazaguanine reductase, found in Cronobacter sakazakii (strain ATCC BAA-894) (Enterobacter sakazakii).